Reading from the N-terminus, the 155-residue chain is Ribosomal RNA large subunit methyltransferase H (155 aa).

Residues leucine 73, glycine 104, and 123–128 (LSALTL) contribute to the S-adenosyl-L-methionine site.

It belongs to the RNA methyltransferase RlmH family. In terms of assembly, homodimer.

Its subcellular location is the cytoplasm. The enzyme catalyses pseudouridine(1915) in 23S rRNA + S-adenosyl-L-methionine = N(3)-methylpseudouridine(1915) in 23S rRNA + S-adenosyl-L-homocysteine + H(+). Its function is as follows. Specifically methylates the pseudouridine at position 1915 (m3Psi1915) in 23S rRNA. The protein is Ribosomal RNA large subunit methyltransferase H of Coxiella burnetii (strain Dugway 5J108-111).